The chain runs to 395 residues: Argininosuccinate synthase (395 aa).

Residues 10 to 18 (AYSGGLDTS) and A37 contribute to the ATP site. Residues Y88 and S93 each contribute to the L-citrulline site. An ATP-binding site is contributed by G118. T120, N124, and D125 together coordinate L-aspartate. N124 provides a ligand contact to L-citrulline. Positions 128, 179, 188, 264, and 276 each coordinate L-citrulline.

The protein belongs to the argininosuccinate synthase family. Type 1 subfamily. As to quaternary structure, homotetramer.

It localises to the cytoplasm. The catalysed reaction is L-citrulline + L-aspartate + ATP = 2-(N(omega)-L-arginino)succinate + AMP + diphosphate + H(+). The protein operates within amino-acid biosynthesis; L-arginine biosynthesis; L-arginine from L-ornithine and carbamoyl phosphate: step 2/3. The protein is Argininosuccinate synthase of Pelagibacter ubique (strain HTCC1062).